We begin with the raw amino-acid sequence, 355 residues long: Histidine biosynthesis bifunctional protein HisB (355 aa).

The tract at residues 1–166 is histidinol-phosphatase; that stretch reads MKQKILFIDR…DITKEIIKRN (166 aa). Catalysis depends on D9, which acts as the Nucleophile. Mg(2+)-binding residues include D9 and D11. The Proton donor role is filled by D11. 4 residues coordinate Zn(2+): C93, H95, C101, and C103. D130 contacts Mg(2+). The imidazoleglycerol-phosphate dehydratase stretch occupies residues 167–355; that stretch reads RYREVIRETK…NTLPTSKGIL (189 aa).

This sequence in the N-terminal section; belongs to the histidinol-phosphatase family. The protein in the C-terminal section; belongs to the imidazoleglycerol-phosphate dehydratase family. Mg(2+) is required as a cofactor. The cofactor is Zn(2+).

The protein resides in the cytoplasm. It carries out the reaction D-erythro-1-(imidazol-4-yl)glycerol 3-phosphate = 3-(imidazol-4-yl)-2-oxopropyl phosphate + H2O. The enzyme catalyses L-histidinol phosphate + H2O = L-histidinol + phosphate. It participates in amino-acid biosynthesis; L-histidine biosynthesis; L-histidine from 5-phospho-alpha-D-ribose 1-diphosphate: step 6/9. It functions in the pathway amino-acid biosynthesis; L-histidine biosynthesis; L-histidine from 5-phospho-alpha-D-ribose 1-diphosphate: step 8/9. The sequence is that of Histidine biosynthesis bifunctional protein HisB from Buchnera aphidicola subsp. Schizaphis graminum (strain Sg).